The primary structure comprises 402 residues: Protein lag-2 (402 aa).

Positions 1–15 (MIAYFLLLLTCLPVL) are cleaved as a signal peptide. Residues 16 to 279 (QARVEVHQEF…TTTTPTTVEI (264 aa)) lie on the Extracellular side of the membrane. Residues Asn-72 and Asn-105 are each glycosylated (N-linked (GlcNAc...) asparagine). The region spanning 122–166 (VTCARNYFGNRCENFCDAHLAKAARKRCDAMGRLRCDIGWMGPHC) is the DSL domain. 9 disulfides stabilise this stretch: Cys-124-Cys-133, Cys-137-Cys-149, Cys-157-Cys-166, Cys-175-Cys-183, Cys-177-Cys-204, Cys-206-Cys-215, Cys-233-Cys-245, Cys-239-Cys-254, and Cys-256-Cys-265. EGF-like domains lie at 171–216 (DPRK…TRCE) and 229–266 (RPDA…EFCE). An N-linked (GlcNAc...) asparagine glycan is attached at Asn-194. The chain crosses the membrane as a helical span at residues 280–306 (TVSTSGYSSAVYITVALFVIFSIIIGC). Over 307–402 (FKYKFKPMRQ…PPSIPACHYV (96 aa)) the chain is Cytoplasmic.

May interact with lin-12 / Notch receptor. In terms of tissue distribution, expressed in the gonad distal tip cell (DTC) of hermaphrodites.

The protein localises to the cell membrane. Its function is as follows. Probable ligand for lin-12/Notch and glp-1/Notch receptors and involved in the mediation of Notch signaling. Involved in the lin-12/Notch pathway signaling of cell fate in vulval precursor cells (VPCs) and in the postembryonic mesodermal lineage (M lineage), acting redundantly with dsl-1 and apx-1. Functions in uterine cells to promote basement membrane mobility during tissue remodeling. Required for oocyte growth control, acting redundantly with apx-1, perhaps signaling via the glp-1/Notch pathway. Plays a role in Notch-dependent induction of left-right asymmetry in interneurons and motoneurons. Involved in maintaining the developmentally arrested larval state known as dauer, probably signaling in the glp-1/Notch pathway. Required for normal sleep bout quantity and arousal thresholds during the transition from the last larval stage to adulthood in well-fed animals. In Caenorhabditis elegans, this protein is Protein lag-2.